An 84-amino-acid chain; its full sequence is MSILSFLLGEKKKSAAVAKERLQLIIAHERVGGRPPADYLPALQKELVAVISKYVKISNDDIRVSLERQDDLEVLEVKIEIPQA.

The protein belongs to the MinE family.

Its function is as follows. Prevents the cell division inhibition by proteins MinC and MinD at internal division sites while permitting inhibition at polar sites. This ensures cell division at the proper site by restricting the formation of a division septum at the midpoint of the long axis of the cell. This chain is Cell division topological specificity factor, found in Burkholderia mallei (strain NCTC 10247).